Reading from the N-terminus, the 221-residue chain is 2-amino-5-formylamino-6-ribosylaminopyrimidin-4(3H)-one 5'-monophosphate deformylase (221 aa).

Positions 29, 31, 40, and 108 each coordinate Fe cation.

The protein belongs to the creatininase superfamily. FAPy deformylase family. As to quaternary structure, homodimer. Requires Fe(2+) as cofactor. It depends on Zn(2+) as a cofactor.

The catalysed reaction is 2-amino-5-formylamino-6-(5-phospho-D-ribosylamino)pyrimidin-4(3H)-one + H2O = 2,5-diamino-6-(1-D-ribosylamino)pyrimidin-4(3H)-one 5'-phosphate + formate + H(+). Its pathway is cofactor biosynthesis; coenzyme F420 biosynthesis. It functions in the pathway cofactor biosynthesis; riboflavin biosynthesis. In terms of biological role, catalyzes the hydrolysis of the formamide of 2-amino-5-formylamino-6-ribosylamino-4(3H)-pyrimidinone 5'-monophosphate (FAPy) to form 2,5-diamino-6-ribosylamino-4(3H)-pyrimidinone 5'-phosphate (APy). This is 2-amino-5-formylamino-6-ribosylaminopyrimidin-4(3H)-one 5'-monophosphate deformylase from Methanococcus maripaludis (strain DSM 14266 / JCM 13030 / NBRC 101832 / S2 / LL).